A 903-amino-acid chain; its full sequence is KAT8 regulatory NSL complex subunit 1-like protein (903 aa).

Disordered stretches follow at residues 319-343 (DSDA…DECN), 419-441 (MPKS…PSSP), and 652-676 (TECT…HRSE). 2 stretches are compositionally biased toward polar residues: residues 423 to 441 (PQGT…PSSP) and 652 to 661 (TECTSSYSPD). Residues 748-862 (EIITPSWKEV…ESPKGKTIHW (115 aa)) form the PEHE domain.

This chain is KAT8 regulatory NSL complex subunit 1-like protein (kansl1l), found in Xenopus tropicalis (Western clawed frog).